The following is a 308-amino-acid chain: C-4 methylsterol oxidase (308 aa).

A helical transmembrane segment spans residues 56-76 (LLFFLTHEIFYFGRCLPWAII). The Fatty acid hydroxylase domain occupies 145–282 (WAVFFVLEDT…FRWWDFILDT (138 aa)). The Histidine box-1 signature appears at 160 to 164 (HRGLH). The short motif at 173 to 177 (HKQHH) is the Histidine box-2 element. The Histidine box-3 motif lies at 257-263 (HHDEHHH).

It belongs to the sterol desaturase family. Fe cation serves as cofactor.

Its subcellular location is the endoplasmic reticulum membrane. It carries out the reaction 4,4-dimethyl-5alpha-cholest-7-en-3beta-ol + 6 Fe(II)-[cytochrome b5] + 3 O2 + 5 H(+) = 4alpha-carboxy-4beta-methyl-5alpha-cholest-7-ene-3beta-ol + 6 Fe(III)-[cytochrome b5] + 4 H2O. It functions in the pathway steroid biosynthesis; zymosterol biosynthesis; zymosterol from lanosterol: step 3/6. In terms of biological role, C-4 methylsterol oxidase; part of the third module of ergosterol biosynthesis pathway that includes the late steps of the pathway. ERG25 is a catalytic component of the C-4 demethylation complex that catalyzes the conversion of 4,4-dimethylfecosterol into fecosterol via 4-methylfecosterol. Catalyzes the three-step monooxygenation required for the demethylation of 4,4-dimethyl and 4alpha-methylsterols. The third module or late pathway involves the ergosterol synthesis itself through consecutive reactions that mainly occur in the endoplasmic reticulum (ER) membrane. Firstly, the squalene synthase ERG9 catalyzes the condensation of 2 farnesyl pyrophosphate moieties to form squalene, which is the precursor of all steroids. Squalene synthase is crucial for balancing the incorporation of farnesyl diphosphate (FPP) into sterol and nonsterol isoprene synthesis. Secondly, the squalene epoxidase ERG1 catalyzes the stereospecific oxidation of squalene to (S)-2,3-epoxysqualene, which is considered to be a rate-limiting enzyme in steroid biosynthesis. Then, the lanosterol synthase ERG7 catalyzes the cyclization of (S)-2,3 oxidosqualene to lanosterol, a reaction that forms the sterol core. In the next steps, lanosterol is transformed to zymosterol through a complex process involving various demethylation, reduction and desaturation reactions. The lanosterol 14-alpha-demethylase ERG11 (also known as CYP51) catalyzes C14-demethylation of lanosterol to produce 4,4'-dimethyl cholesta-8,14,24-triene-3-beta-ol, which is critical for ergosterol biosynthesis. The C-14 reductase ERG24 reduces the C14=C15 double bond of 4,4-dimethyl-cholesta-8,14,24-trienol to produce 4,4-dimethyl-cholesta-8,24-dienol. 4,4-dimethyl-cholesta-8,24-dienol is substrate of the C-4 demethylation complex ERG25-ERG26-ERG27 in which ERG25 catalyzes the three-step monooxygenation required for the demethylation of 4,4-dimethyl and 4alpha-methylsterols, ERG26 catalyzes the oxidative decarboxylation that results in a reduction of the 3-beta-hydroxy group at the C-3 carbon to an oxo group, and ERG27 is responsible for the reduction of the keto group on the C-3. ERG28 has a role as a scaffold to help anchor ERG25, ERG26 and ERG27 to the endoplasmic reticulum and ERG29 regulates the activity of the iron-containing C4-methylsterol oxidase ERG25. Then, the sterol 24-C-methyltransferase ERG6 catalyzes the methyl transfer from S-adenosyl-methionine to the C-24 of zymosterol to form fecosterol. The C-8 sterol isomerase ERG2 catalyzes the reaction which results in unsaturation at C-7 in the B ring of sterols and thus converts fecosterol to episterol. The sterol-C5-desaturase ERG3 then catalyzes the introduction of a C-5 double bond in the B ring to produce 5-dehydroepisterol. The C-22 sterol desaturase ERG5 further converts 5-dehydroepisterol into ergosta-5,7,22,24(28)-tetraen-3beta-ol by forming the C-22(23) double bond in the sterol side chain. Finally, ergosta-5,7,22,24(28)-tetraen-3beta-ol is substrate of the C-24(28) sterol reductase ERG4 to produce ergosterol. In Candida albicans (strain SC5314 / ATCC MYA-2876) (Yeast), this protein is C-4 methylsterol oxidase.